We begin with the raw amino-acid sequence, 256 residues long: Ribonuclease 3 (256 aa).

The RNase III domain maps to 6-128 (LATLETRLDH…LFGAVFLDAG (123 aa)). E41 serves as a coordination point for Mg(2+). D45 is an active-site residue. Residues D114 and E117 each coordinate Mg(2+). E117 is an active-site residue. The region spanning 155 to 225 (DAKTLLQEFL…AKVALEAAQA (71 aa)) is the DRBM domain.

Belongs to the ribonuclease III family. Homodimer. Mg(2+) is required as a cofactor.

Its subcellular location is the cytoplasm. The catalysed reaction is Endonucleolytic cleavage to 5'-phosphomonoester.. Digests double-stranded RNA. Involved in the processing of primary rRNA transcript to yield the immediate precursors to the large and small rRNAs (23S and 16S). Processes some mRNAs, and tRNAs when they are encoded in the rRNA operon. Processes pre-crRNA and tracrRNA of type II CRISPR loci if present in the organism. In Bordetella bronchiseptica (strain ATCC BAA-588 / NCTC 13252 / RB50) (Alcaligenes bronchisepticus), this protein is Ribonuclease 3.